The sequence spans 229 residues: Potassium/proton antiporter CemA (229 aa).

The next 3 helical transmembrane spans lie at 7–27, 114–134, and 189–209; these read FTPL…SLSF, IICF…LVIL, and ILSG…KFWI.

It belongs to the CemA family.

It localises to the plastid. Its subcellular location is the chloroplast inner membrane. The enzyme catalyses K(+)(in) + H(+)(out) = K(+)(out) + H(+)(in). Contributes to K(+)/H(+) antiport activity by supporting proton efflux to control proton extrusion and homeostasis in chloroplasts in a light-dependent manner to modulate photosynthesis. Prevents excessive induction of non-photochemical quenching (NPQ) under continuous-light conditions. Indirectly promotes efficient inorganic carbon uptake into chloroplasts. The sequence is that of Potassium/proton antiporter CemA from Panax ginseng (Korean ginseng).